The following is a 181-amino-acid chain: Large ribosomal subunit protein uL5 (181 aa).

It belongs to the universal ribosomal protein uL5 family. As to quaternary structure, part of the 50S ribosomal subunit; part of the 5S rRNA/L5/L18/L25 subcomplex. Contacts the 5S rRNA and the P site tRNA. Forms a bridge to the 30S subunit in the 70S ribosome.

Its function is as follows. This is one of the proteins that bind and probably mediate the attachment of the 5S RNA into the large ribosomal subunit, where it forms part of the central protuberance. In the 70S ribosome it contacts protein S13 of the 30S subunit (bridge B1b), connecting the 2 subunits; this bridge is implicated in subunit movement. Contacts the P site tRNA; the 5S rRNA and some of its associated proteins might help stabilize positioning of ribosome-bound tRNAs. The protein is Large ribosomal subunit protein uL5 of Helicobacter pylori (strain P12).